A 313-amino-acid polypeptide reads, in one-letter code: tRNA-cytidine(32) 2-sulfurtransferase (313 aa).

Positions serine 47–serine 52 match the PP-loop motif motif. [4Fe-4S] cluster is bound by residues cysteine 122, cysteine 125, and cysteine 213. The segment at proline 288–lysine 313 is disordered. Over residues threonine 299 to lysine 313 the composition is skewed to basic and acidic residues.

It belongs to the TtcA family. In terms of assembly, homodimer. Mg(2+) is required as a cofactor. [4Fe-4S] cluster serves as cofactor.

The protein resides in the cytoplasm. It carries out the reaction cytidine(32) in tRNA + S-sulfanyl-L-cysteinyl-[cysteine desulfurase] + AH2 + ATP = 2-thiocytidine(32) in tRNA + L-cysteinyl-[cysteine desulfurase] + A + AMP + diphosphate + H(+). It functions in the pathway tRNA modification. Its function is as follows. Catalyzes the ATP-dependent 2-thiolation of cytidine in position 32 of tRNA, to form 2-thiocytidine (s(2)C32). The sulfur atoms are provided by the cysteine/cysteine desulfurase (IscS) system. The polypeptide is tRNA-cytidine(32) 2-sulfurtransferase (Yersinia pseudotuberculosis serotype O:1b (strain IP 31758)).